The primary structure comprises 336 residues: Cyclin-H1-1 (336 aa).

Residue A2 is modified to N-acetylalanine. Positions 297-336 (KSCLGHSSSHDESKKREKRSKHKSHRSSNDTPNGAPPPIG) are disordered. Positions 312–322 (REKRSKHKSHR) are enriched in basic residues.

The protein belongs to the cyclin family. As to quaternary structure, interacts with CDKA-1, CDKD-2 and CDKD-3, but not CDKD-1 and CDKF-1.

Its subcellular location is the cytoplasm. The protein resides in the nucleus. Functionally, associates with CDK-2 and CDK-3 and activates the CDK kinases. The protein is Cyclin-H1-1 (CYCH1-1) of Arabidopsis thaliana (Mouse-ear cress).